We begin with the raw amino-acid sequence, 345 residues long: D-erythrose-4-phosphate dehydrogenase (345 aa).

11-12 (RI) is an NAD(+) binding site. Substrate-binding positions include 158–160 (SCT), R204, 217–218 (TK), and R240. Catalysis depends on C159, which acts as the Nucleophile. N322 contacts NAD(+).

Belongs to the glyceraldehyde-3-phosphate dehydrogenase family. Epd subfamily. In terms of assembly, homotetramer.

It localises to the cytoplasm. It carries out the reaction D-erythrose 4-phosphate + NAD(+) + H2O = 4-phospho-D-erythronate + NADH + 2 H(+). The protein operates within cofactor biosynthesis; pyridoxine 5'-phosphate biosynthesis; pyridoxine 5'-phosphate from D-erythrose 4-phosphate: step 1/5. Functionally, catalyzes the NAD-dependent conversion of D-erythrose 4-phosphate to 4-phosphoerythronate. The protein is D-erythrose-4-phosphate dehydrogenase of Vibrio parahaemolyticus serotype O3:K6 (strain RIMD 2210633).